We begin with the raw amino-acid sequence, 162 residues long: Sec-independent protein translocase protein TatB (162 aa).

Residues 1-21 (MFDIGFLEIIVIMVIALIVIG) traverse the membrane as a helical segment. Residues 86–162 (IQDEFGIDQE…ESTPESSNKS (77 aa)) form a disordered region. Residues 108–117 (FSGTQFNKAP) are compositionally biased toward polar residues. Residues 123–135 (PTTEESPSSTPET) show a composition bias toward low complexity. The span at 147 to 162 (DVSAPSESTPESSNKS) shows a compositional bias: polar residues.

The protein belongs to the TatB family. In terms of assembly, the Tat system comprises two distinct complexes: a TatABC complex, containing multiple copies of TatA, TatB and TatC subunits, and a separate TatA complex, containing only TatA subunits. Substrates initially bind to the TatABC complex, which probably triggers association of the separate TatA complex to form the active translocon.

The protein localises to the cell inner membrane. Part of the twin-arginine translocation (Tat) system that transports large folded proteins containing a characteristic twin-arginine motif in their signal peptide across membranes. Together with TatC, TatB is part of a receptor directly interacting with Tat signal peptides. TatB may form an oligomeric binding site that transiently accommodates folded Tat precursor proteins before their translocation. This is Sec-independent protein translocase protein TatB from Hydrogenovibrio crunogenus (strain DSM 25203 / XCL-2) (Thiomicrospira crunogena).